The primary structure comprises 519 residues: Anthranilate synthase component 1 (519 aa).

L-tryptophan is bound by residues threonine 40 and 293 to 295 (PYM). A chorismate-binding site is contributed by 330-331 (GT). Mg(2+) is bound at residue glutamate 363. Residues tyrosine 451, arginine 471, 485–487 (GSG), and glycine 487 each bind chorismate. Glutamate 500 is a binding site for Mg(2+).

The protein belongs to the anthranilate synthase component I family. In terms of assembly, heterotetramer consisting of two non-identical subunits: a beta subunit (TrpG) and a large alpha subunit (TrpE). The cofactor is Mg(2+).

It carries out the reaction chorismate + L-glutamine = anthranilate + pyruvate + L-glutamate + H(+). It functions in the pathway amino-acid biosynthesis; L-tryptophan biosynthesis; L-tryptophan from chorismate: step 1/5. Its activity is regulated as follows. Feedback inhibited by tryptophan. Functionally, part of a heterotetrameric complex that catalyzes the two-step biosynthesis of anthranilate, an intermediate in the biosynthesis of L-tryptophan. In the first step, the glutamine-binding beta subunit (TrpG) of anthranilate synthase (AS) provides the glutamine amidotransferase activity which generates ammonia as a substrate that, along with chorismate, is used in the second step, catalyzed by the large alpha subunit of AS (TrpE) to produce anthranilate. In the absence of TrpG, TrpE can synthesize anthranilate directly from chorismate and high concentrations of ammonia. The sequence is that of Anthranilate synthase component 1 (trpE) from Buchnera aphidicola subsp. Diuraphis noxia.